A 432-amino-acid chain; its full sequence is GRAM domain-containing protein 2B (432 aa).

M1 is subject to N-acetylmethionine. Disordered regions lie at residues 1–61 and 74–106; these read MTEL…SPDQ and DGAS…SSQY. Composition is skewed to basic and acidic residues over residues 9–39 and 81–99; these read EDTK…EEKK and DKND…ERKK. The GRAM domain occupies 110–177; that stretch reads MHFHKLFLSV…FSVTLIKKTK (68 aa). The segment covering 220–233 has biased composition (polar residues); that stretch reads TSVGNSPNPSSAEN. The disordered stretch occupies residues 220–239; it reads TSVGNSPNPSSAENSFRADR. 3 positions are modified to phosphoserine: S225, S242, and S252. The interval 262–285 is disordered; that stretch reads RQDMEGYSSSGSQTPESENSRDFH. Over residues 268–278 the composition is skewed to polar residues; the sequence is YSSSGSQTPES.

The sequence is that of GRAM domain-containing protein 2B (GRAMD2B) from Homo sapiens (Human).